The chain runs to 118 residues: Ribosomal silencing factor RsfS (118 aa).

The protein belongs to the Iojap/RsfS family. In terms of assembly, interacts with ribosomal protein uL14 (rplN).

The protein localises to the cytoplasm. Functions as a ribosomal silencing factor. Interacts with ribosomal protein uL14 (rplN), blocking formation of intersubunit bridge B8. Prevents association of the 30S and 50S ribosomal subunits and the formation of functional ribosomes, thus repressing translation. The polypeptide is Ribosomal silencing factor RsfS (Bacillus subtilis (strain 168)).